Reading from the N-terminus, the 140-residue chain is Large ribosomal subunit protein uL11 (140 aa).

Belongs to the universal ribosomal protein uL11 family. As to quaternary structure, part of the ribosomal stalk of the 50S ribosomal subunit. Interacts with L10 and the large rRNA to form the base of the stalk. L10 forms an elongated spine to which L12 dimers bind in a sequential fashion forming a multimeric L10(L12)X complex. Post-translationally, one or more lysine residues are methylated.

Functionally, forms part of the ribosomal stalk which helps the ribosome interact with GTP-bound translation factors. The polypeptide is Large ribosomal subunit protein uL11 (Thermoanaerobacter pseudethanolicus (strain ATCC 33223 / 39E) (Clostridium thermohydrosulfuricum)).